We begin with the raw amino-acid sequence, 663 residues long: Translation factor GUF1, mitochondrial (663 aa).

The N-terminal 44 residues, methionine 1 to alanine 44, are a transit peptide targeting the mitochondrion. The tr-type G domain maps to glutamate 65–valine 245. GTP contacts are provided by residues alanine 74 to serine 81, aspartate 138 to histidine 142, and asparagine 192 to aspartate 195.

Belongs to the TRAFAC class translation factor GTPase superfamily. Classic translation factor GTPase family. LepA subfamily.

It localises to the mitochondrion inner membrane. It carries out the reaction GTP + H2O = GDP + phosphate + H(+). Its function is as follows. Promotes mitochondrial protein synthesis. May act as a fidelity factor of the translation reaction, by catalyzing a one-codon backward translocation of tRNAs on improperly translocated ribosomes. Binds to mitochondrial ribosomes in a GTP-dependent manner. The sequence is that of Translation factor GUF1, mitochondrial from Coccidioides posadasii (strain C735) (Valley fever fungus).